The sequence spans 1024 residues: Isoleucine--tRNA ligase (1024 aa).

The 'HIGH' region motif lies at 52–62 (PTANGRPHVGH). Residues 590-594 (KMSKS) carry the 'KMSKS' region motif. An ATP-binding site is contributed by Lys-593.

This sequence belongs to the class-I aminoacyl-tRNA synthetase family. IleS type 2 subfamily. As to quaternary structure, monomer. The cofactor is Zn(2+).

It is found in the cytoplasm. The enzyme catalyses tRNA(Ile) + L-isoleucine + ATP = L-isoleucyl-tRNA(Ile) + AMP + diphosphate. Functionally, catalyzes the attachment of isoleucine to tRNA(Ile). As IleRS can inadvertently accommodate and process structurally similar amino acids such as valine, to avoid such errors it has two additional distinct tRNA(Ile)-dependent editing activities. One activity is designated as 'pretransfer' editing and involves the hydrolysis of activated Val-AMP. The other activity is designated 'posttransfer' editing and involves deacylation of mischarged Val-tRNA(Ile). This chain is Isoleucine--tRNA ligase, found in Picrophilus torridus (strain ATCC 700027 / DSM 9790 / JCM 10055 / NBRC 100828 / KAW 2/3).